The primary structure comprises 466 residues: Sulfate adenylyltransferase subunit 1 (466 aa).

In terms of domain architecture, tr-type G spans Lys22–Glu237. The segment at Gly31–Ser38 is G1. Gly31–Ser38 lines the GTP pocket. The segment at Gly89–Asp93 is G2. The tract at residues Asp110–Gly113 is G3. GTP contacts are provided by residues Asp110–His114 and Asn165–Asp168. The tract at residues Asn165–Asp168 is G4. The tract at residues Ser202–Leu204 is G5.

The protein belongs to the TRAFAC class translation factor GTPase superfamily. Classic translation factor GTPase family. CysN/NodQ subfamily. As to quaternary structure, heterodimer composed of CysD, the smaller subunit, and CysN.

It carries out the reaction sulfate + ATP + H(+) = adenosine 5'-phosphosulfate + diphosphate. It participates in sulfur metabolism; hydrogen sulfide biosynthesis; sulfite from sulfate: step 1/3. Its function is as follows. With CysD forms the ATP sulfurylase (ATPS) that catalyzes the adenylation of sulfate producing adenosine 5'-phosphosulfate (APS) and diphosphate, the first enzymatic step in sulfur assimilation pathway. APS synthesis involves the formation of a high-energy phosphoric-sulfuric acid anhydride bond driven by GTP hydrolysis by CysN coupled to ATP hydrolysis by CysD. In Colwellia psychrerythraea (strain 34H / ATCC BAA-681) (Vibrio psychroerythus), this protein is Sulfate adenylyltransferase subunit 1.